A 627-amino-acid polypeptide reads, in one-letter code: Pentatricopeptide repeat-containing protein At2g15630, mitochondrial (627 aa).

The N-terminal 29 residues, 1–29 (MRRFTVPCILRHRISILSGAGYSPAAARL), are a transit peptide targeting the mitochondrion. PPR repeat units follow at residues 154–188 (STIL…GFYP), 189–223 (KTET…EIKS), 224–258 (NVYT…GIKP), 259–293 (TIVT…GFQP), 294–324 (DMQT…IGLV), 326–360 (DSVS…GMVP), 361–395 (TFYT…GIVL), 396–430 (DSVT…GIQP), 431–465 (TQFT…GMKP), 466–500 (DLVM…SINP), 501–535 (DDVT…GIKP), 536–570 (DHIS…GFNP), and 571–605 (TLLT…GIVP).

This sequence belongs to the PPR family. P subfamily.

Its subcellular location is the mitochondrion. This Arabidopsis thaliana (Mouse-ear cress) protein is Pentatricopeptide repeat-containing protein At2g15630, mitochondrial.